The primary structure comprises 999 residues: Ulvan lyase, long isoform (999 aa).

The N-terminal stretch at 1-21 (MKCLKTLLVSTTLLTAFSLNA) is a signal peptide. Residue 126 to 127 (SH) coordinates substrate. His-127 (proton donor/acceptor) is an active-site residue. 3 residues coordinate Ca(2+): Asp-189, Asp-199, and Lys-201. Tyr-280 and Arg-297 together coordinate substrate. Ca(2+) is bound by residues Asp-300, Asp-303, and Tyr-305. Tyr-361 provides a ligand contact to substrate.

It belongs to the polysaccharide lyase 24 family.

Functionally, ulvan lyase involved in ulvan degradation. Ulvan is the main polysaccharide component of the Ulvales (green seaweed) cell wall. It is composed of disaccharide building blocks comprising 3-sulfated rhamnose (Rha3S) linked to D-glucuronic acid (GlcA), L-iduronic acid (IduA), or D-xylose (Xyl). Ulvan lyase catalyzes preferentially the endolytic cleavage of the glycosidic bond between Rha3S and the uronic acid GlcA, but not IduA, producing oligosaccharides that have unsaturated 4-deoxy-L-threo-hex-4-enopyranosiduronic acid (deltaUA) at the non-reducing end. The most abundant end products in the degradation of the ulvan polysaccharide were deltaUA-Rha3S disaccharides and deltaUA-Rha3S-IduA-Rha3S and deltaUA-Rha3S-Xyl-Rha3S tetrasaccharides. The protein is Ulvan lyase, long isoform of Alteromonas sp. (strain LOR).